The chain runs to 274 residues: MRSNNNNPLTRDEILSRYFPQYRPAVAASQGLSGGSCIIAHDTHRVVLRRHHDPDAPPAHFLRHYRALSQLPASLAPRALFYTPGWMAVEYLHGVVNSALPDADELAALLYHLHQQPRFGWRIALSPLLAQYWSCCDPARRTPFWLRRLKQLQKNGEPRPLRLAPLHMDVHGDNIVLTSAGLRLIDWEYAGDGDIALELAAVWVEDERQHRQLADAYAARARIDARQLWRQIRLWHPWVIMLKAGWFEYRWRQTGEQQFIRLADETWRQLRMKG.

The protein belongs to the thiamine kinase family.

It catalyses the reaction thiamine + ATP = thiamine phosphate + ADP + H(+). It functions in the pathway cofactor biosynthesis; thiamine diphosphate biosynthesis; thiamine phosphate from thiamine: step 1/1. Functionally, catalyzes the ATP-dependent phosphorylation of thiamine to thiamine phosphate. Is involved in thiamine salvage. The protein is Thiamine kinase of Salmonella heidelberg (strain SL476).